Here is a 1175-residue protein sequence, read N- to C-terminus: DNA-directed RNA polymerase subunit beta (1175 aa).

The interval Q12–P33 is disordered. Low complexity predominate over residues S20–S31.

The protein belongs to the RNA polymerase beta chain family. In terms of assembly, the RNAP catalytic core consists of 2 alpha, 1 beta, 1 beta' and 1 omega subunit. When a sigma factor is associated with the core the holoenzyme is formed, which can initiate transcription.

It carries out the reaction RNA(n) + a ribonucleoside 5'-triphosphate = RNA(n+1) + diphosphate. DNA-dependent RNA polymerase catalyzes the transcription of DNA into RNA using the four ribonucleoside triphosphates as substrates. In Mycobacterium avium (strain 104), this protein is DNA-directed RNA polymerase subunit beta.